Consider the following 744-residue polypeptide: Prestin (744 aa).

Topologically, residues 1–79 (MDHAEENEIP…WLPAYKFKEY (79 aa)) are cytoplasmic. A helical membrane pass occupies residues 80–105 (VLGDLVSGISTGVLQLPQGLAFAMLA). Residues 106 to 109 (AVPP) lie on the Extracellular side of the membrane. Residues 110-125 (VFGLYSSFYPVIMYCF) form a helical membrane-spanning segment. Topologically, residues 126 to 137 (FGTSRHISIGPF) are cytoplasmic. Residues 138 to 147 (AVISLMIGGV) traverse the membrane as a helical segment. Over 148-178 (AVRLVPDDIVIPGGVNATNGTEARDALRVKV) the chain is Extracellular. Residues 158 to 168 (IPGGVNATNGT) carry the Involved in motor function motif. Asn163 and Asn166 each carry an N-linked (GlcNAc...) asparagine glycan. A helical membrane pass occupies residues 179-196 (AMSVTLLSGIIQFCLGVC). Residues 197 to 208 (RFGFVAIYLTEP) are Cytoplasmic-facing. Residues 209 to 230 (LVRGFTTAAAVHVFTSMLKYLF) traverse the membrane as a helical segment. Residues 231–243 (GVKTKRYSGIFSV) lie on the Extracellular side of the membrane. The helical intramembrane region spans 244-252 (VYSTVAVLQ). Over 253–258 (NVKNLN) the chain is Extracellular. A helical membrane pass occupies residues 259-282 (VCSLGVGLMVFGLLLGGKEFNERF). Residues 283–291 (KEKLPAPIP) lie on the Cytoplasmic side of the membrane. A helical membrane pass occupies residues 292–304 (LEFFAVVMGTGIS). At 305–337 (AGFNLHESYSVDVVGTLPLGLLPPANPDTSLFH) the chain is on the extracellular side. A helical membrane pass occupies residues 338 to 361 (LVYVDAIAIAIVGFSVTISMAKTL). Topologically, residues 362–370 (ANKHGYQVD) are cytoplasmic. A helical transmembrane segment spans residues 371-388 (GNQELIALGICNSIGSLF). The Extracellular segment spans residues 389-396 (QTFSISCS). The helical transmembrane segment at 397-406 (LSRSLVQEGT) threads the bilayer. Residue Ser398 participates in salicylate binding. Residues 407–410 (GGKT) lie on the Cytoplasmic side of the membrane. The chain crosses the membrane as a helical span at residues 411-429 (QLAGCLASLMILLVILATG). The Extracellular segment spans residues 430–436 (FLFESLP). A helical membrane pass occupies residues 437–455 (QAVLSAIVIVNLKGMFMQF). The Cytoplasmic portion of the chain corresponds to 456–469 (SDLPFFWRTSKIEL). A helical transmembrane segment spans residues 470–484 (TIWLTTFVSSLFLGL). Residue Asp485 is a topological domain, extracellular. The chain crosses the membrane as a helical span at residues 486–497 (YGLITAVIIALL). Topologically, residues 498–744 (TVIYRTQSPS…PNATPTTPEA (247 aa)) are cytoplasmic. Residues 505–718 (SPSYKVLGQL…AVLGSHVREA (214 aa)) are extended region for STAS domain. The region spanning 525–713 (AYEEVKEIPG…HSIHDAVLGS (189 aa)) is the STAS domain. Residues 717–744 (EAMAEQEASAPPPQDDMEPNATPTTPEA) are disordered.

This sequence belongs to the SLC26A/SulP transporter (TC 2.A.53) family. Homodimer. Interacts (via STAS domain) with CALM; this interaction is calcium-dependent and the STAS domain interacts with only one lobe of CALM which is an elongated conformation. Interacts with MYH1. As to expression, highly expressed in mature outer hair cells, but not in inner hair cells or other cells of the basilar membrane and the organ of Corti.

It is found in the lateral cell membrane. It carries out the reaction 2 hydrogencarbonate(in) + chloride(out) = 2 hydrogencarbonate(out) + chloride(in). Voltage-sensitive motor protein that drives outer hair cell (OHC) electromotility (eM) and participates in sound amplification in the hearing organ. Converts changes in the transmembrane electric potential into mechanical displacements resulting in the coupling of its expansion to movement of a charged voltage sensor across the lipid membrane. The nature of the voltage sensor is not completely clear, and two models compete. In the first model, acts as an incomplete transporter where intracellular chloride anion acts as extrinsic voltage sensor that drives conformational change in the protein which is sufficient to produce a length change in the plane of the membrane and hence in the length of the OHC. The second model in which multiple charged amino acid residues are distributed at the intracellular and extracellular membrane interfaces that form an intrinsic voltage sensor, whose movement produces the non-linear capacitance (NLC). However, the effective voltage sensor may be the result of a hybrid voltage sensor assembled from intrinsic charge (charged residues) and extrinsic charge (bound anion). Notably, binding of anions to the anion-binding pocket partially neutralizes the intrinsic positive charge rather than to form an electrically negative sensor, therefore remaining charge may serve as voltage sensor that, after depolarization, moves from down (expanded state) to up (contracted) conformation, which is accompanied by an eccentric contraction of the intermembrane cross-sectional area of the protein as well as a major increase in the hydrophobic thickness of the protein having as consequences the plasma membrane thickening and the cell contraction after membrane depolarization. The anion-binding pocket transits from the inward-open (Down) state, where it is exposed toward the intracellular solvent in the absence of anion, to the occluded (Up) state upon anion binding. Salicylate competes for the anion-binding site and inhibits the voltage-sensor movement, and therefore inhibits the charge transfer and electromotility by displacing Cl(-) from the anion-binding site and by preventing the structural transitions to the contracted state. In addition, can act as a weak Cl(-)/HCO3 (-) antiporter across the cell membrane and so regulate the intracellular pH of the outer hair cells (OHCs), while firstly found as being unable to mediate electrogenic anion transport. Moreover, supports a role in cardiac mechanical amplification serving as an elastic element to enhance the actomyosin- based sarcomere contraction system. The sequence is that of Prestin from Meriones unguiculatus (Mongolian jird).